Reading from the N-terminus, the 125-residue chain is Translation initiation factor 5A (125 aa).

Residue lysine 35 is modified to Hypusine.

The protein belongs to the eIF-5A family.

The protein localises to the cytoplasm. In terms of biological role, functions by promoting the formation of the first peptide bond. The sequence is that of Translation initiation factor 5A (eIF5A) from Methanosphaerula palustris (strain ATCC BAA-1556 / DSM 19958 / E1-9c).